A 333-amino-acid chain; its full sequence is Complement C1q and tumor necrosis factor-related protein 9B (333 aa).

The N-terminal stretch at 1-19 (MRIWWLLLAIEICTGNINS) is a signal peptide. 3 consecutive Collagen-like domains span residues 24–82 (RQGH…DGKV), 95–154 (GSPG…PGPM), and 155–191 (GPIGKPGPKGEAGPTGPQGEPGVRGIRGWKGDRGEKG). The disordered stretch occupies residues 24–189 (RQGHPGIPGN…IRGWKGDRGE (166 aa)). The span at 26–40 (GHPGIPGNPGHNGLP) shows a compositional bias: low complexity. Basic and acidic residues-rich tracts occupy residues 42-55 (RDGRDGAKGDKGDA) and 69-88 (TSGEKGERGADGKVEAKGIK). Residues 197-333 (LVLPKSAFTV…FTGFLLFSSQ (137 aa)) form the C1q domain.

In terms of assembly, interacts with CTRP9A and ADIPOQ. Forms heterotrimers and heterooligomeric complexes with CTRP9A. Expressed at low levels. Not expressed in adipose tissues.

The protein resides in the secreted. Probable adipokine. Activates AMPK, AKT, and p44/42 MAPK signaling pathways. This Homo sapiens (Human) protein is Complement C1q and tumor necrosis factor-related protein 9B (C1QTNF9B).